Reading from the N-terminus, the 429-residue chain is Adenylosuccinate synthetase (429 aa).

GTP-binding positions include 12–18 (GDEGKGK) and 40–42 (GHT). The Proton acceptor role is filled by D13. Positions 13 and 40 each coordinate Mg(2+). Residues 13–16 (DEGK), 38–41 (NAGH), T129, R143, Q223, T238, and R302 each bind IMP. Residue H41 is the Proton donor of the active site. Position 298–304 (298–304 (TVTGRQR)) interacts with substrate. GTP-binding positions include R304, 330 to 332 (KID), and 412 to 414 (STS).

Belongs to the adenylosuccinate synthetase family. In terms of assembly, homodimer. Mg(2+) is required as a cofactor.

It is found in the cytoplasm. It catalyses the reaction IMP + L-aspartate + GTP = N(6)-(1,2-dicarboxyethyl)-AMP + GDP + phosphate + 2 H(+). The protein operates within purine metabolism; AMP biosynthesis via de novo pathway; AMP from IMP: step 1/2. Plays an important role in the de novo pathway of purine nucleotide biosynthesis. Catalyzes the first committed step in the biosynthesis of AMP from IMP. This Erythrobacter litoralis (strain HTCC2594) protein is Adenylosuccinate synthetase.